A 214-amino-acid polypeptide reads, in one-letter code: Thymidylate kinase (214 aa).

ATP is bound at residue 12–19 (GLDGSGKS).

This sequence belongs to the thymidylate kinase family.

The catalysed reaction is dTMP + ATP = dTDP + ADP. Functionally, phosphorylation of dTMP to form dTDP in both de novo and salvage pathways of dTTP synthesis. The sequence is that of Thymidylate kinase from Bdellovibrio bacteriovorus (strain ATCC 15356 / DSM 50701 / NCIMB 9529 / HD100).